Reading from the N-terminus, the 232-residue chain is Ubiquinone biosynthesis O-methyltransferase (232 aa).

S-adenosyl-L-methionine-binding residues include Arg-36, Gly-55, Asp-76, and Leu-120.

The protein belongs to the methyltransferase superfamily. UbiG/COQ3 family.

The enzyme catalyses a 3-demethylubiquinol + S-adenosyl-L-methionine = a ubiquinol + S-adenosyl-L-homocysteine + H(+). It carries out the reaction a 3-(all-trans-polyprenyl)benzene-1,2-diol + S-adenosyl-L-methionine = a 2-methoxy-6-(all-trans-polyprenyl)phenol + S-adenosyl-L-homocysteine + H(+). It participates in cofactor biosynthesis; ubiquinone biosynthesis. O-methyltransferase that catalyzes the 2 O-methylation steps in the ubiquinone biosynthetic pathway. This chain is Ubiquinone biosynthesis O-methyltransferase, found in Pseudomonas putida (strain ATCC 700007 / DSM 6899 / JCM 31910 / BCRC 17059 / LMG 24140 / F1).